The primary structure comprises 119 residues: Basic phospholipase A2 DE-1 (119 aa).

Cystine bridges form between Cys-11–Cys-71, Cys-26–Cys-118, Cys-28–Cys-44, Cys-43–Cys-99, Cys-50–Cys-92, Cys-60–Cys-85, and Cys-78–Cys-90. Ca(2+) contacts are provided by Tyr-27, Gly-29, Gly-31, and Asp-48. Asp-93 is an active-site residue.

Belongs to the phospholipase A2 family. Group I subfamily. D49 sub-subfamily. Ca(2+) is required as a cofactor. Expressed by the venom gland.

It localises to the secreted. It catalyses the reaction a 1,2-diacyl-sn-glycero-3-phosphocholine + H2O = a 1-acyl-sn-glycero-3-phosphocholine + a fatty acid + H(+). In terms of biological role, PLA2 catalyzes the calcium-dependent hydrolysis of the 2-acyl groups in 3-sn-phosphoglycerides. This Hemachatus haemachatus (Rinkhals) protein is Basic phospholipase A2 DE-1.